Reading from the N-terminus, the 155-residue chain is 6,7-dimethyl-8-ribityllumazine synthase (155 aa).

Residues Phe-22, 57-59 (AVE), and 81-83 (TVI) each bind 5-amino-6-(D-ribitylamino)uracil. 86 to 87 (GT) contacts (2S)-2-hydroxy-3-oxobutyl phosphate. His-89 serves as the catalytic Proton donor. A 5-amino-6-(D-ribitylamino)uracil-binding site is contributed by Phe-114. Arg-128 provides a ligand contact to (2S)-2-hydroxy-3-oxobutyl phosphate.

Belongs to the DMRL synthase family. Forms an icosahedral capsid composed of 60 subunits, arranged as a dodecamer of pentamers.

The enzyme catalyses (2S)-2-hydroxy-3-oxobutyl phosphate + 5-amino-6-(D-ribitylamino)uracil = 6,7-dimethyl-8-(1-D-ribityl)lumazine + phosphate + 2 H2O + H(+). The protein operates within cofactor biosynthesis; riboflavin biosynthesis; riboflavin from 2-hydroxy-3-oxobutyl phosphate and 5-amino-6-(D-ribitylamino)uracil: step 1/2. Its function is as follows. Catalyzes the formation of 6,7-dimethyl-8-ribityllumazine by condensation of 5-amino-6-(D-ribitylamino)uracil with 3,4-dihydroxy-2-butanone 4-phosphate. This is the penultimate step in the biosynthesis of riboflavin. The polypeptide is 6,7-dimethyl-8-ribityllumazine synthase (Psychromonas ingrahamii (strain DSM 17664 / CCUG 51855 / 37)).